Here is a 284-residue protein sequence, read N- to C-terminus: tRNA uridine(34) hydroxylase (284 aa).

Residues 132–226 enclose the Rhodanese domain; that stretch reads AGRPVVMLDT…YFEEVGGAHY (95 aa). Residue Cys186 is the Cysteine persulfide intermediate of the active site.

This sequence belongs to the TrhO family.

It catalyses the reaction uridine(34) in tRNA + AH2 + O2 = 5-hydroxyuridine(34) in tRNA + A + H2O. Functionally, catalyzes oxygen-dependent 5-hydroxyuridine (ho5U) modification at position 34 in tRNAs. The chain is tRNA uridine(34) hydroxylase from Burkholderia orbicola (strain MC0-3).